Reading from the N-terminus, the 572-residue chain is DNA mismatch repair protein MutL (572 aa).

Belongs to the DNA mismatch repair MutL/HexB family.

This protein is involved in the repair of mismatches in DNA. It is required for dam-dependent methyl-directed DNA mismatch repair. May act as a 'molecular matchmaker', a protein that promotes the formation of a stable complex between two or more DNA-binding proteins in an ATP-dependent manner without itself being part of a final effector complex. This is DNA mismatch repair protein MutL from Dictyoglomus turgidum (strain DSM 6724 / Z-1310).